Here is a 322-residue protein sequence, read N- to C-terminus: Cytochrome f (322 aa).

A signal peptide spans 1-35 (MQNRNIFSWVKEQTTRSISVSIMILIYVITWTSIS). Positions 38, 58, 61, and 62 each coordinate heme. Residues 288–308 (VQGLFFFFASVILAQIFLVLK) form a helical membrane-spanning segment.

The protein belongs to the cytochrome f family. The 4 large subunits of the cytochrome b6-f complex are cytochrome b6, subunit IV (17 kDa polypeptide, petD), cytochrome f and the Rieske protein, while the 4 small subunits are PetG, PetL, PetM and PetN. The complex functions as a dimer. It depends on heme as a cofactor.

The protein localises to the plastid. It is found in the chloroplast thylakoid membrane. In terms of biological role, component of the cytochrome b6-f complex, which mediates electron transfer between photosystem II (PSII) and photosystem I (PSI), cyclic electron flow around PSI, and state transitions. This is Cytochrome f from Nandina domestica (Heavenly bamboo).